Here is a 298-residue protein sequence, read N- to C-terminus: 4-diphosphocytidyl-2-C-methyl-D-erythritol kinase (298 aa).

Lysine 11 is an active-site residue. Residue 94 to 104 (PMGGGLGGGSS) coordinates ATP. The active site involves aspartate 136.

It belongs to the GHMP kinase family. IspE subfamily.

It catalyses the reaction 4-CDP-2-C-methyl-D-erythritol + ATP = 4-CDP-2-C-methyl-D-erythritol 2-phosphate + ADP + H(+). It participates in isoprenoid biosynthesis; isopentenyl diphosphate biosynthesis via DXP pathway; isopentenyl diphosphate from 1-deoxy-D-xylulose 5-phosphate: step 3/6. Its function is as follows. Catalyzes the phosphorylation of the position 2 hydroxy group of 4-diphosphocytidyl-2C-methyl-D-erythritol. The polypeptide is 4-diphosphocytidyl-2-C-methyl-D-erythritol kinase (Chromohalobacter salexigens (strain ATCC BAA-138 / DSM 3043 / CIP 106854 / NCIMB 13768 / 1H11)).